We begin with the raw amino-acid sequence, 896 residues long: Bifunctional glutamine synthetase adenylyltransferase/adenylyl-removing enzyme (896 aa).

An adenylyl removase region spans residues 1-411 (MSDNRLDTAR…LFNEILSEPE (411 aa)). The segment at 417 to 896 (NSEWQWAWQE…EVFGEEAATA (480 aa)) is adenylyl transferase.

This sequence belongs to the GlnE family. Requires Mg(2+) as cofactor.

It carries out the reaction [glutamine synthetase]-O(4)-(5'-adenylyl)-L-tyrosine + phosphate = [glutamine synthetase]-L-tyrosine + ADP. The enzyme catalyses [glutamine synthetase]-L-tyrosine + ATP = [glutamine synthetase]-O(4)-(5'-adenylyl)-L-tyrosine + diphosphate. Functionally, involved in the regulation of glutamine synthetase GlnA, a key enzyme in the process to assimilate ammonia. When cellular nitrogen levels are high, the C-terminal adenylyl transferase (AT) inactivates GlnA by covalent transfer of an adenylyl group from ATP to specific tyrosine residue of GlnA, thus reducing its activity. Conversely, when nitrogen levels are low, the N-terminal adenylyl removase (AR) activates GlnA by removing the adenylyl group by phosphorolysis, increasing its activity. The regulatory region of GlnE binds the signal transduction protein PII (GlnB) which indicates the nitrogen status of the cell. The polypeptide is Bifunctional glutamine synthetase adenylyltransferase/adenylyl-removing enzyme (Neisseria meningitidis serogroup A / serotype 4A (strain DSM 15465 / Z2491)).